Reading from the N-terminus, the 397-residue chain is Elongation factor Tu (397 aa).

Residues 10–207 enclose the tr-type G domain; sequence KPHVNIGTIG…AVDESIPDPV (198 aa). Residues 19 to 26 form a G1 region; the sequence is GHVDHGKT. 19–26 contributes to the GTP binding site; sequence GHVDHGKT. Threonine 26 lines the Mg(2+) pocket. A G2 region spans residues 63–67; it reads GITIN. A G3 region spans residues 84–87; it reads DAPG. GTP contacts are provided by residues 84–88 and 139–142; these read DAPGH and NKAD. The G4 stretch occupies residues 139–142; the sequence is NKAD. A G5 region spans residues 177–179; it reads SGL.

The protein belongs to the TRAFAC class translation factor GTPase superfamily. Classic translation factor GTPase family. EF-Tu/EF-1A subfamily. In terms of assembly, monomer.

The protein localises to the cytoplasm. It carries out the reaction GTP + H2O = GDP + phosphate + H(+). Functionally, GTP hydrolase that promotes the GTP-dependent binding of aminoacyl-tRNA to the A-site of ribosomes during protein biosynthesis. This is Elongation factor Tu from Tropheryma whipplei (strain TW08/27) (Whipple's bacillus).